The sequence spans 562 residues: Transcriptional adapter 2A (562 aa).

The ZZ-type zinc-finger motif lies at 91 to 146 (KDANRCATCRCSLTEPYIKCSECLDTLLCLQCFSRGKEAFSHRNNHAYIIVRDNIQ). Zn(2+)-binding residues include C96, C99, C110, C113, C119, C122, H132, and H136. Residues 154–198 (WTARDERILLKTLRTHGYGNWEAVSQALDQRHEPAEVRRHYHDCY) enclose the SANT domain. The SWIRM domain maps to 471-562 (CLTPTEYNFS…GHISRPPSYG (92 aa)).

In terms of assembly, component of the Ada2a-containing (ATAC) complex composed of at least Ada2a, Atac1, Hcf, Ada3, Gcn5, Mocs2B, Charac-14, Atac3, Atac2, NC2beta and wds. Component of a complex that does not include Gcn5 or Ada3.

Its subcellular location is the nucleus. It localises to the chromosome. Its function is as follows. Component of the histone acetyltransferase (HAT) complex ATAC; predominantly involved in acetylation of histone H4, including at Lys-6 (H4K5ac) and Lys-13 (H4K12ac). May be part of several different complexes, including Gcn5-independent complexes involved in RNA polymerase II-dependent transcription. The chain is Transcriptional adapter 2A from Drosophila melanogaster (Fruit fly).